The sequence spans 428 residues: Probable pectin lyase F (428 aa).

An N-terminal signal peptide occupies residues 1 to 20; the sequence is MVLLHPLLTAAALLGASARA. Cysteine 83 and cysteine 107 are disulfide-bonded. Residue arginine 257 is part of the active site. Asparagine 276 carries an N-linked (GlcNAc...) asparagine glycan. The cysteines at positions 324 and 332 are disulfide-linked. The segment at 383–428 is disordered; that stretch reads GSGGSGAASSSVSITPSPTSSAIPSSSATPSSSAYARRHYARHHHY. A compositionally biased stretch (low complexity) spans 389 to 417; the sequence is AASSSVSITPSPTSSAIPSSSATPSSSAY. The segment covering 418 to 428 has biased composition (basic residues); it reads ARRHYARHHHY.

This sequence belongs to the polysaccharide lyase 1 family.

Its subcellular location is the secreted. The enzyme catalyses Eliminative cleavage of (1-&gt;4)-alpha-D-galacturonan methyl ester to give oligosaccharides with 4-deoxy-6-O-methyl-alpha-D-galact-4-enuronosyl groups at their non-reducing ends.. Functionally, pectinolytic enzymes consist of four classes of enzymes: pectin lyase, polygalacturonase, pectin methylesterase and rhamnogalacturonase. Among pectinolytic enzymes, pectin lyase is the most important in depolymerization of pectin, since it cleaves internal glycosidic bonds of highly methylated pectins. This Aspergillus oryzae (strain ATCC 42149 / RIB 40) (Yellow koji mold) protein is Probable pectin lyase F (pelF).